The chain runs to 169 residues: S-ribosylhomocysteine lyase (169 aa).

3 residues coordinate Fe cation: H54, H58, and C128.

This sequence belongs to the LuxS family. As to quaternary structure, homodimer. Fe cation is required as a cofactor.

The catalysed reaction is S-(5-deoxy-D-ribos-5-yl)-L-homocysteine = (S)-4,5-dihydroxypentane-2,3-dione + L-homocysteine. Involved in the synthesis of autoinducer 2 (AI-2) which is secreted by bacteria and is used to communicate both the cell density and the metabolic potential of the environment. The regulation of gene expression in response to changes in cell density is called quorum sensing. Catalyzes the transformation of S-ribosylhomocysteine (RHC) to homocysteine (HC) and 4,5-dihydroxy-2,3-pentadione (DPD). This Shewanella baltica (strain OS223) protein is S-ribosylhomocysteine lyase.